The chain runs to 718 residues: Polyphosphate kinase (718 aa).

Position 47 (Asn-47) interacts with ATP. 2 residues coordinate Mg(2+): Arg-372 and Arg-402. His-432 serves as the catalytic Phosphohistidine intermediate. Residues Tyr-465, Arg-561, and His-589 each contribute to the ATP site. A disordered region spans residues 683–718 (KADHGDTTPTSNAHQFIPMMSPKNEPDASDLDREDD). Residues 709 to 718 (DASDLDREDD) are compositionally biased toward acidic residues.

The protein belongs to the polyphosphate kinase 1 (PPK1) family. The cofactor is Mg(2+). An intermediate of this reaction is the autophosphorylated ppk in which a phosphate is covalently linked to a histidine residue through a N-P bond.

It catalyses the reaction [phosphate](n) + ATP = [phosphate](n+1) + ADP. In terms of biological role, catalyzes the reversible transfer of the terminal phosphate of ATP to form a long-chain polyphosphate (polyP). In Lactiplantibacillus plantarum (strain ATCC BAA-793 / NCIMB 8826 / WCFS1) (Lactobacillus plantarum), this protein is Polyphosphate kinase.